We begin with the raw amino-acid sequence, 317 residues long: Ubiquinone biosynthesis protein COQ9-A, mitochondrial (317 aa).

The N-terminal 46 residues, 1–46 (MAASVTRVLKGAGGRQLLLMVARRRPVLMQPFLLMPRKFWVSSALR), are a transit peptide targeting the mitochondrion. The disordered stretch occupies residues 50–97 (QRQPPFSASSTHAETQGHAEEQYQQKQPPPRYTDQAGEESEGYESEEQ). Residues 53 to 63 (PPFSASSTHAE) are compositionally biased toward polar residues. The span at 85–96 (AGEESEGYESEE) shows a compositional bias: acidic residues. An a 1,2-diacylglycero-3-phosphoethanolamine-binding site is contributed by Arg-243.

It belongs to the COQ9 family. Homodimer. Heterodimer; two heterodimers of COQ7:COQ9 come together on the same side of the lipid pseudo-bilayer and form a curved tetramer with a hydrophobic surface suitable for membrane interaction. These two tetramers assemble into a soluble octamer with a pseudo-bilayer of lipids captured within. Interacts with COQ7; this interaction allows ubiquinone (CoQ) isoprene intermediates presentation to COQ7 and facilitates the COQ7-mediated hydroxylase step.

The protein localises to the mitochondrion. It functions in the pathway cofactor biosynthesis; ubiquinone biosynthesis. Functionally, membrane-associated protein that warps the membrane surface to access and bind aromatic isoprenes with high specificity, including ubiquinone (CoQ) isoprene intermediates and presents them directly to COQ7, therefore facilitating the COQ7-mediated hydroxylase step. Participates in the biosynthesis of coenzyme Q, also named ubiquinone, an essential lipid-soluble electron transporter for aerobic cellular respiration. The protein is Ubiquinone biosynthesis protein COQ9-A, mitochondrial (coq9-a) of Xenopus laevis (African clawed frog).